The chain runs to 105 residues: Small ribosomal subunit protein uS10 (105 aa).

The protein belongs to the universal ribosomal protein uS10 family. In terms of assembly, part of the 30S ribosomal subunit.

In terms of biological role, involved in the binding of tRNA to the ribosomes. This is Small ribosomal subunit protein uS10 from Arthrospira platensis (Spirulina platensis).